The following is a 388-amino-acid chain: N-acetylneuraminate epimerase (388 aa).

The first 26 residues, 1–26 (MFSLIRAKRLAIGIAALAWSTGAVMA), serve as a signal peptide directing secretion. Kelch repeat units lie at residues 48-92 (MAYV…AAAG), 94-147 (KIFA…VGLA), 149-186 (GRIA…KLVD), 187-232 (SYMG…ATMG), 236-285 (FLLV…VAGA), 307-356 (ANAA…DAPG), and 358-387 (LLVV…LSVE). The active-site Proton acceptor is Glu242.

The protein belongs to the NanM family. In terms of assembly, homodimer.

It is found in the periplasm. The enzyme catalyses N-acetyl-alpha-neuraminate = N-acetyl-beta-neuraminate. Its function is as follows. Converts alpha-N-acetylneuranimic acid (Neu5Ac) to the beta-anomer, accelerating the equilibrium between the alpha- and beta-anomers. Probably facilitates sialidase-negative bacteria to compete successfully for limited amounts of extracellular Neu5Ac, which is likely taken up in the beta-anomer. In addition, the rapid removal of sialic acid from solution might be advantageous to the bacterium to damp down host responses. In Brucella melitensis biotype 1 (strain ATCC 23456 / CCUG 17765 / NCTC 10094 / 16M), this protein is N-acetylneuraminate epimerase.